A 532-amino-acid polypeptide reads, in one-letter code: Exodeoxyribonuclease 7 large subunit (532 aa).

The segment at 497 to 532 is disordered; the sequence is AITTGEGTPAPETAAAPKKKPAKPASSDPGNQGNLF. Positions 499–512 are enriched in low complexity; it reads TTGEGTPAPETAAA.

The protein belongs to the XseA family. Heterooligomer composed of large and small subunits.

It localises to the cytoplasm. The enzyme catalyses Exonucleolytic cleavage in either 5'- to 3'- or 3'- to 5'-direction to yield nucleoside 5'-phosphates.. Its function is as follows. Bidirectionally degrades single-stranded DNA into large acid-insoluble oligonucleotides, which are then degraded further into small acid-soluble oligonucleotides. The chain is Exodeoxyribonuclease 7 large subunit from Agrobacterium fabrum (strain C58 / ATCC 33970) (Agrobacterium tumefaciens (strain C58)).